Consider the following 527-residue polypeptide: Palmitoleoyl-protein carboxylesterase NOTUM (527 aa).

A signal peptide spans 1–19 (MKSYLILNTLLLSLLKING). 3 N-linked (GlcNAc...) asparagine glycosylation sites follow: N64, N86, and N104. Catalysis depends on S203, which acts as the Charge relay system. A glycan (N-linked (GlcNAc...) asparagine) is linked at N249. Active-site charge relay system residues include D311 and H359. Residue N451 is glycosylated (N-linked (GlcNAc...) asparagine).

The protein belongs to the pectinacetylesterase family. Notum subfamily. As to expression, expressed in the anterior pole.

The protein localises to the secreted. It carries out the reaction [Wnt protein]-O-(9Z)-hexadecenoyl-L-serine + H2O = [Wnt protein]-L-serine + (9Z)-hexadecenoate + H(+). In terms of biological role, carboxylesterase that acts as a key negative regulator of the Wnt signaling pathway. Acts by specifically mediating depalmitoleoylation of WNT proteins. Serine palmitoleoylation of WNT proteins is required for efficient binding to frizzled receptors. Promotes head regeneration following amputation by inhibiting the Wnt signaling pathway. The polypeptide is Palmitoleoyl-protein carboxylesterase NOTUM (Schmidtea mediterranea (Freshwater planarian flatworm)).